We begin with the raw amino-acid sequence, 245 residues long: Type I iodothyronine deiodinase (245 aa).

The Extracellular portion of the chain corresponds to 1 to 9 (LSIRVLLHK). The helical; Signal-anchor for type III membrane protein transmembrane segment at 10–30 (LLILLQVTLSVVVGKTMMILF) threads the bilayer. Over 31–245 (PDTTKRYILK…EIRAVLEKLK (215 aa)) the chain is Cytoplasmic. Sec123 is an active-site residue. Residue Sec123 is a non-standard amino acid, selenocysteine.

It belongs to the iodothyronine deiodinase family. Predominantly monomer. Can form homodimers but homodimerization is not essential for enzyme activity.

It is found in the cell membrane. Its subcellular location is the endoplasmic reticulum membrane. It localises to the basolateral cell membrane. The catalysed reaction is 3,3',5-triiodo-L-thyronine + iodide + A + H(+) = L-thyroxine + AH2. The enzyme catalyses 3,3',5'-triiodo-L-thyronine + iodide + A + H(+) = L-thyroxine + AH2. It carries out the reaction 3,3'-diiodo-L-thyronine + iodide + A + H(+) = 3,3',5'-triiodo-L-thyronine + AH2. It catalyses the reaction 3,3'-diiodo-L-thyronine + iodide + A + H(+) = 3,3',5-triiodo-L-thyronine + AH2. The catalysed reaction is 3'-iodo-L-thyronine + iodide + A + H(+) = 3',5'-diiodo-L-thyronine + AH2. The enzyme catalyses 3-iodo-L-thyronine + iodide + A + H(+) = 3,5-diiodo-L-thyronine + AH2. It carries out the reaction 3-iodo-L-thyronine + iodide + A + H(+) = 3,3'-diiodo-L-thyronine + AH2. It catalyses the reaction 3,3'-diiodothyronamine + iodide + A + H(+) = 3,3',5'-triiodothyronamine + AH2. The catalysed reaction is 3'-iodothyronamine + iodide + A + H(+) = 3',5'-diiodothyronamine + AH2. The enzyme catalyses 3-iodothyronamine + iodide + A + H(+) = 3,3'-diiodothyronamine + AH2. It carries out the reaction 3,3'-diiodothyronamine + iodide + A + H(+) = 3,3',5-triiodothyronamine + AH2. It catalyses the reaction 3-iodothyronamine + iodide + A + H(+) = 3,5-diiodothyronamine + AH2. The catalysed reaction is 3,3'-diiodo-L-thyronine sulfate + iodide + A + H(+) = 3,3',5'-triiodo-L-thyronine sulfate + AH2. The enzyme catalyses 3,3',5'-triiodo-L-thyronine sulfate + iodide + A + H(+) = L-thyroxine sulfate + AH2. It carries out the reaction 3,3'-diiodo-L-thyronine sulfate + iodide + A + H(+) = 3,3',5-triiodo-L-thyronine sulfate + AH2. Plays a crucial role in the metabolism of thyroid hormones (TH) and has specific roles in TH activation and inactivation by deiodination. Catalyzes the deiodiantion of L-thyroxine (T4) to 3,5,3'-triiodothyronine (T3) and 3,3',5'-triiodothyronine (rT3) to 3,3'-diiodothyronine (3,3'-T2) via outer-ring deiodination (ORD). Catalyzes the deiodiantion of T4 to rT3, T3 to 3,3'-T2, 3,5-diiodothyronine (3,5-T2) to 3-monoiodothyronine (3-T1) and 3,3'-T2 to 3-T1 via inner-ring deiodination (IRD). Catalyzes the deiodiantion of 3',5'-diiodothyronine (3',5'-T2) to 3'-monoiodothyronine (3'-T1) via ORD. Catalyzes the phenolic ring deiodinations of 3,3',5'-triiodothyronamine, 3',5'-diiodothyronamine and 3,3'-diiodothyronamine as well as tyrosyl ring deiodinations of 3,5,3'-triiodothyronamine and 3,5-diiodothyronamine. Catalyzes the deiodination of L-thyroxine sulfate and 3,3',5-triiodo-L-thyronine sulfate via IRD and of 3,3',5'-triiodo-L-thyronine sulfate via ORD. The sequence is that of Type I iodothyronine deiodinase (DIO1) from Gallus gallus (Chicken).